The primary structure comprises 133 residues: Small ribosomal subunit protein uS8 (133 aa).

The protein belongs to the universal ribosomal protein uS8 family. Part of the 30S ribosomal subunit. Contacts proteins S5 and S12.

In terms of biological role, one of the primary rRNA binding proteins, it binds directly to 16S rRNA central domain where it helps coordinate assembly of the platform of the 30S subunit. The sequence is that of Small ribosomal subunit protein uS8 from Prochlorococcus marinus subsp. pastoris (strain CCMP1986 / NIES-2087 / MED4).